A 179-amino-acid polypeptide reads, in one-letter code: ATP synthase subunit delta (179 aa).

Belongs to the ATPase delta chain family. In terms of assembly, F-type ATPases have 2 components, F(1) - the catalytic core - and F(0) - the membrane proton channel. F(1) has five subunits: alpha(3), beta(3), gamma(1), delta(1), epsilon(1). F(0) has three main subunits: a(1), b(2) and c(10-14). The alpha and beta chains form an alternating ring which encloses part of the gamma chain. F(1) is attached to F(0) by a central stalk formed by the gamma and epsilon chains, while a peripheral stalk is formed by the delta and b chains.

The protein localises to the cell inner membrane. In terms of biological role, f(1)F(0) ATP synthase produces ATP from ADP in the presence of a proton or sodium gradient. F-type ATPases consist of two structural domains, F(1) containing the extramembraneous catalytic core and F(0) containing the membrane proton channel, linked together by a central stalk and a peripheral stalk. During catalysis, ATP synthesis in the catalytic domain of F(1) is coupled via a rotary mechanism of the central stalk subunits to proton translocation. This protein is part of the stalk that links CF(0) to CF(1). It either transmits conformational changes from CF(0) to CF(1) or is implicated in proton conduction. The protein is ATP synthase subunit delta of Burkholderia mallei (strain SAVP1).